Reading from the N-terminus, the 166-residue chain is Lipoprotein signal peptidase (166 aa).

Helical transmembrane passes span 11-31 (LNLVIILVVFIFDRTTKLYIL), 42-62 (IYITPFLNLFLIWNKGIAFGL), 69-89 (VIYNSITILIGLIIIAIIFMM), and 99-119 (FFALIAGGAFGNFYDRIVYTA). Active-site residues include Asp-122 and Asp-140. The chain crosses the membrane as a helical span at residues 133 to 153 (WFVFNVADIFITIGVFCLILV).

This sequence belongs to the peptidase A8 family.

It is found in the cell inner membrane. It carries out the reaction Release of signal peptides from bacterial membrane prolipoproteins. Hydrolyzes -Xaa-Yaa-Zaa-|-(S,diacylglyceryl)Cys-, in which Xaa is hydrophobic (preferably Leu), and Yaa (Ala or Ser) and Zaa (Gly or Ala) have small, neutral side chains.. The protein operates within protein modification; lipoprotein biosynthesis (signal peptide cleavage). Functionally, this protein specifically catalyzes the removal of signal peptides from prolipoproteins. In Pelagibacter ubique (strain HTCC1062), this protein is Lipoprotein signal peptidase.